Consider the following 621-residue polypeptide: Nuclear distribution protein nudE homolog 1 (621 aa).

Composition is skewed to polar residues over residues 1–20 (MPSADGSSSARPNGTSSRSD) and 231–263 (RSPSTPQTPDLFNRSPASSIVSSPLFSTPTLKT). Disordered stretches follow at residues 1–21 (MPSADGSSSARPNGTSSRSDQ), 218–372 (ELQN…PKSG), 389–537 (ERVQ…GVVN), and 569–621 (ISTP…GETY). The stretch at 18–219 (RSDQLAWYKS…IHEKLRNAEL (202 aa)) forms a coiled coil. 2 stretches are compositionally biased toward low complexity: residues 264–288 (SLMSATATPPSPPISESSSSLRKSM) and 300–310 (SASDSSFGSRS). A compositionally biased stretch (polar residues) spans 323 to 341 (SRATSYAFTSNRPTPSVTN). 3 stretches are compositionally biased toward low complexity: residues 353-362 (NENTNKHNNN), 404-414 (SPSRTSSRSGS), and 469-496 (SRPSSRTSYSSHSSVSHSTHPSVTPSTR). Residues 599 to 613 (DRLEGDMGPPERKSN) are compositionally biased toward basic and acidic residues.

This sequence belongs to the nudE family. Self-associates. Interacts with nudF.

It localises to the cytoplasm. Its subcellular location is the cytoskeleton. Required for nuclear migration within hyphae during vegetative growth. This Aspergillus fumigatus (strain ATCC MYA-4609 / CBS 101355 / FGSC A1100 / Af293) (Neosartorya fumigata) protein is Nuclear distribution protein nudE homolog 1 (nde1).